Here is a 354-residue protein sequence, read N- to C-terminus: Guanine nucleotide-binding protein G(i) subunit alpha-1 (354 aa).

The N-myristoyl glycine moiety is linked to residue Gly-2. Cys-3 carries the S-palmitoyl cysteine lipid modification. Residues Arg-32–Phe-354 form the G-alpha domain. A G1 motif region spans residues Lys-35–Thr-48. GTP-binding positions include Glu-43–Thr-48, Asp-150–Ser-151, and Leu-175–Arg-178. Residue Ser-47 coordinates Mg(2+). Positions Asp-173–Thr-181 are G2 motif. Thr-181 is a binding site for Mg(2+). Residues Phe-196–Arg-205 form a G3 motif region. Residues Asp-200–Gln-204, Asn-269–Asp-272, and Ala-326 each bind GTP. Residues Ile-265 to Asp-272 are G4 motif. The interval Thr-324–Thr-329 is G5 motif.

The protein belongs to the G-alpha family. G(i/o/t/z) subfamily. Heterotrimeric G proteins are composed of 3 units; alpha, beta and gamma. The alpha chain contains the guanine nucleotide binding site. Part of a spindle orientation complex at least composed of GNAI1, GPSM2 and NUMA1. Identified in complex with the beta subunit GNB1 and the gamma subunit GNG1. Identified in complex with the beta subunit GNB1 and the gamma subunit GNG2. Component of the TAS2R14-GNAI1 complex, consisting of TAS2R14, GNAI1, GNB1 and GNG2; within the complex interacts with TAS2R14; this complex plays a role in the perception of bitterness. GTP binding causes dissociation of the heterotrimer, liberating the individual subunits so that they can interact with downstream effector proteins. Interacts (GDP-bound form) with GPSM1; this inhibits guanine nucleotide exchange and GTP binding. Interacts (GDP-bound form) with GPSM2 (via GoLoco domains); this inhibits guanine nucleotide exchange. Interacts with RGS10; this strongly enhances GTP hydrolysis. Interacts with RGS1 and RGS16; this strongly enhances GTPase activity. Interacts with RGS4. Interacts with RGS12. Interacts (via active GTP- or inactive GDP-bound forms) with RGS14 (via RGS and GoLoco domains). Interacts with RGS3, RGS6, RGS7, RGS8, RGS17, RGS18 and RGS20 (in vitro). Interacts (GDP-bound form) with RIC8A (via C-terminus); promoting GNAI1 folding and association with the plasma membrane. Interacts (inactive GDP-bound form) with NUCB1 (via GBA motif); the interaction leads to activation of GNAI1. Interacts (inactive GDP-bound form) with CCDC88C/DAPLE (via GBA motif); the interaction leads to activation of GNAI1. Interacts (inactive GDP-bound form) with CCDC8A/GIV (via GBA motif). Post-translationally, myristoylation at Gly-2 is required for membrane anchoring before palmitoylation. Palmitoylation at Cys-3 varies with membrane lipid composition.

The protein localises to the nucleus. It is found in the cytoplasm. It localises to the cell membrane. Its subcellular location is the cytoskeleton. The protein resides in the microtubule organizing center. The protein localises to the centrosome. It is found in the cell cortex. It localises to the membrane. It carries out the reaction GTP + H2O = GDP + phosphate + H(+). Guanine nucleotide-binding proteins (G proteins) function as transducers downstream of G protein-coupled receptors (GPCRs) in numerous signaling cascades. The alpha chain contains the guanine nucleotide binding site and alternates between an active, GTP-bound state and an inactive, GDP-bound state. Signaling by an activated GPCR promotes GDP release and GTP binding. The alpha subunit has a low GTPase activity that converts bound GTP to GDP, thereby terminating the signal. Both GDP release and GTP hydrolysis are modulated by numerous regulatory proteins. Signaling is mediated via effector proteins, such as adenylate cyclase. Inhibits adenylate cyclase activity of ADCY1, ADCY5 and ADCY6, leading to decreased intracellular cAMP levels. The inactive GDP-bound form prevents the association of RGS14 with centrosomes and is required for the translocation of RGS14 from the cytoplasm to the plasma membrane. Required for normal cytokinesis during mitosis. Required for cortical dynein-dynactin complex recruitment during metaphase. In Bos taurus (Bovine), this protein is Guanine nucleotide-binding protein G(i) subunit alpha-1 (GNAI1).